The sequence spans 97 residues: Intermembrane phospholipid transport system binding protein MlaB (97 aa).

An STAS domain is found at methionine 1–arginine 97.

As to quaternary structure, the complex is composed of two ATP-binding proteins (MlaF), two transmembrane proteins (MlaE), two cytoplasmic solute-binding proteins (MlaB) and six periplasmic solute-binding proteins (MlaD).

It is found in the cytoplasm. Part of the ABC transporter complex MlaFEDB, which is involved in a phospholipid transport pathway that maintains lipid asymmetry in the outer membrane by retrograde trafficking of phospholipids from the outer membrane to the inner membrane. MlaB plays critical roles in both the assembly and activity of the complex. May act by modulating MlaF structure and stability. This is Intermembrane phospholipid transport system binding protein MlaB from Escherichia coli (strain K12).